Consider the following 196-residue polypeptide: Pyridoxal 5'-phosphate synthase subunit PdxT (196 aa).

47–49 (GES) is a binding site for L-glutamine. The Nucleophile role is filled by cysteine 79. L-glutamine contacts are provided by residues arginine 106 and 134–135 (IR). Active-site charge relay system residues include histidine 170 and glutamate 172.

This sequence belongs to the glutaminase PdxT/SNO family. In the presence of PdxS, forms a dodecamer of heterodimers. Only shows activity in the heterodimer.

It catalyses the reaction aldehydo-D-ribose 5-phosphate + D-glyceraldehyde 3-phosphate + L-glutamine = pyridoxal 5'-phosphate + L-glutamate + phosphate + 3 H2O + H(+). The catalysed reaction is L-glutamine + H2O = L-glutamate + NH4(+). Its pathway is cofactor biosynthesis; pyridoxal 5'-phosphate biosynthesis. In terms of biological role, catalyzes the hydrolysis of glutamine to glutamate and ammonia as part of the biosynthesis of pyridoxal 5'-phosphate. The resulting ammonia molecule is channeled to the active site of PdxS. This Halalkalibacterium halodurans (strain ATCC BAA-125 / DSM 18197 / FERM 7344 / JCM 9153 / C-125) (Bacillus halodurans) protein is Pyridoxal 5'-phosphate synthase subunit PdxT.